The sequence spans 136 residues: Histone H3.3C (136 aa).

Positions 1–10 (MARTKQTACK) are enriched in polar residues. The segment at 1-39 (MARTKQTACKSTGRKAPRKQLATKAAHKSAPAMGGVKKP) is disordered. Arg3 carries the post-translational modification Asymmetric dimethylarginine; by PRMT6. The residue at position 4 (Thr4) is a Phosphothreonine; by HASPIN. Lys5 is subject to Allysine; alternate. Residue Lys5 is modified to N6,N6,N6-trimethyllysine; alternate. The residue at position 5 (Lys5) is an N6,N6-dimethyllysine; alternate. The residue at position 5 (Lys5) is an N6-(2-hydroxyisobutyryl)lysine; alternate. Lys5 is subject to N6-acetyllysine; alternate. Lys5 is subject to N6-methyllysine; alternate. Gln6 is modified (5-glutamyl dopamine; alternate). Gln6 is modified (5-glutamyl serotonin; alternate). At Thr7 the chain carries Phosphothreonine; by PKC. Residue Lys10 is modified to N6-(2-hydroxyisobutyryl)lysine; alternate. An N6-lactoyllysine; alternate modification is found at Lys10. An N6-methylated lysine modification is found at Lys10. Ser11 is subject to ADP-ribosylserine; alternate. Phosphoserine; alternate; by AURKB, AURKC, RPS6KA3, RPS6KA4 and RPS6KA5 is present on Ser11. The residue at position 12 (Thr12) is a Phosphothreonine; by PKC. Lys15 carries the N6-(2-hydroxyisobutyryl)lysine; alternate modification. Lys15 carries the post-translational modification N6-lactoyllysine; alternate. The residue at position 15 (Lys15) is an N6-acetyllysine. Lys15 carries the N6-glutaryllysine; alternate modification. Arg18 carries the asymmetric dimethylarginine modification. An N6-(2-hydroxyisobutyryl)lysine; alternate mark is found at Lys19, Lys24, and Lys28. N6-acetyllysine; alternate is present on Lys19. Lys19, Lys24, and Lys28 each carry N6-lactoyllysine; alternate. Residues Lys19, Lys24, and Lys28 each carry the N6-glutaryllysine; alternate modification. N6-butyryllysine; alternate occurs at positions 19 and 24. Residue Lys19 is modified to N6-methylated lysine; alternate. Lys24 carries the post-translational modification N6-acetyllysine. Lys28 carries the N6-acetyllysine; alternate modification. The residue at position 28 (Lys28) is an N6-methylated lysine; alternate. Ser29 bears the ADP-ribosylserine; alternate mark. At Ser29 the chain carries Phosphoserine; alternate; by AURKB, AURKC and RPS6KA5. Lys37 bears the N6-(2-hydroxyisobutyryl)lysine; alternate mark. Residue Lys37 is modified to N6-acetyllysine; alternate. At Lys37 the chain carries N6-methylated lysine; alternate. Residue Tyr42 is modified to Phosphotyrosine. N6-(2-hydroxyisobutyryl)lysine; alternate is present on Lys57. Lys57 carries the post-translational modification N6-lactoyllysine; alternate. Lys57 is modified (N6-glutaryllysine; alternate). At Lys57 the chain carries N6-succinyllysine; alternate. Ser58 carries the phosphoserine modification. Residues Lys65 and Lys80 each carry the N6-(2-hydroxyisobutyryl)lysine; alternate modification. 2 positions are modified to N6-methylated lysine: Lys65 and Lys80. Residue Lys80 is modified to N6-lactoyllysine; alternate. Lys80 carries the N6-glutaryllysine; alternate modification. Lys80 bears the N6-succinyllysine; alternate mark. A Phosphothreonine modification is found at Thr81. An N6-acetyllysine; alternate mark is found at Lys116 and Lys123. An N6-glutaryllysine; alternate mark is found at Lys116 and Lys123. N6-(2-hydroxyisobutyryl)lysine; alternate is present on Lys123. Position 123 is an N6-methylated lysine; alternate (Lys123). Lys123 carries the N6-succinyllysine; alternate modification.

Belongs to the histone H3 family. As to quaternary structure, the nucleosome is a histone octamer containing two molecules each of H2A, H2B, H3 and H4 assembled in one H3-H4 heterotetramer and two H2A-H2B heterodimers. The octamer wraps approximately 147 bp of DNA. Post-translationally, acetylation is generally linked to gene activation. Acetylation on Lys-19 (H3K18ac) and Lys-24 (H3K24ac) favors methylation at Arg-18 (H3R17me). Acetylation at Lys-123 (H3K122ac) by EP300/p300 plays a central role in chromatin structure: localizes at the surface of the histone octamer and stimulates transcription, possibly by promoting nucleosome instability. In terms of processing, asymmetric dimethylation at Arg-18 (H3R17me2a) is linked to gene activation. Asymmetric dimethylation at Arg-3 (H3R2me2a) by PRMT6 is linked to gene repression and is mutually exclusive with H3 Lys-5 methylation (H3K4me2 and H3K4me3). H3R2me2a is present at the 3' of genes regardless of their transcription state and is enriched on inactive promoters, while it is absent on active promoters. Methylation at Lys-5 (H3K4me) and Lys-80 (H3K79me) are linked to gene activation. Methylation at Lys-5 (H3K4me) facilitates subsequent acetylation of H3 and H4. Methylation at Lys-80 (H3K79me) is associated with DNA double-strand break (DSB) responses and is a specific target for TP53BP1. Methylation at Lys-10 (H3K9me) and Lys-28 (H3K27me) are linked to gene repression. Methylation at Lys-10 (H3K9me) is a specific target for HP1 proteins (CBX1, CBX3 and CBX5) and prevents subsequent phosphorylation at Ser-11 (H3S10ph) and acetylation of H3 and H4. Methylation at Lys-5 (H3K4me) and Lys-80 (H3K79me) require preliminary monoubiquitination of H2B at 'Lys-120'. Post-translationally, phosphorylated at Thr-4 (H3T3ph) by HASPIN during prophase and dephosphorylated during anaphase. Phosphorylation at Ser-11 (H3S10ph) by AURKB is crucial for chromosome condensation and cell-cycle progression during mitosis and meiosis. In addition phosphorylation at Ser-11 (H3S10ph) by RPS6KA4 and RPS6KA5 is important during interphase because it enables the transcription of genes following external stimulation, like mitogens, stress, growth factors or UV irradiation and result in the activation of genes, such as c-fos and c-jun. Phosphorylation at Ser-11 (H3S10ph), which is linked to gene activation, prevents methylation at Lys-10 (H3K9me) but facilitates acetylation of H3 and H4. Phosphorylation at Ser-11 (H3S10ph) by AURKB mediates the dissociation of HP1 proteins (CBX1, CBX3 and CBX5) from heterochromatin. Phosphorylation at Ser-11 (H3S10ph) is also an essential regulatory mechanism for neoplastic cell transformation. Phosphorylated at Ser-29 (H3S28ph) by MAP3K20 isoform 1, RPS6KA5 or AURKB during mitosis or upon ultraviolet B irradiation. Phosphorylation at Thr-7 (H3T6ph) by PRKCB is a specific tag for epigenetic transcriptional activation that prevents demethylation of Lys-5 (H3K4me) by LSD1/KDM1A. At centromeres, specifically phosphorylated at Thr-12 (H3T11ph) from prophase to early anaphase, by DAPK3 and PKN1. Phosphorylation at Thr-12 (H3T11ph) by PKN1 or isoform M2 of PKM (PKM2) is a specific tag for epigenetic transcriptional activation that promotes demethylation of Lys-10 (H3K9me) by KDM4C/JMJD2C. Phosphorylation at Tyr-42 (H3Y41ph) by JAK2 promotes exclusion of CBX5 (HP1 alpha) from chromatin. In terms of processing, lysine deamination at Lys-5 (H3K4all) to form allysine only takes place on H3K4me3 and results in gene repression. Butyrylation of histones marks active promoters and competes with histone acetylation. It is present during late spermatogenesis. Post-translationally, succinylation at Lys-80 (H3K79succ) by KAT2A takes place with a maximum frequency around the transcription start sites of genes. It gives a specific tag for epigenetic transcription activation. Desuccinylation at Lys-123 (H3K122succ) by SIRT7 in response to DNA damage promotes chromatin condensation and double-strand breaks (DSBs) repair. In terms of processing, serine ADP-ribosylation constitutes the primary form of ADP-ribosylation of proteins in response to DNA damage. Serine ADP-ribosylation at Ser-11 (H3S10ADPr) is mutually exclusive with phosphorylation at Ser-11 (H3S10ph) and impairs acetylation at Lys-10 (H3K9ac).

It localises to the nucleus. It is found in the chromosome. In terms of biological role, core component of nucleosome. Nucleosomes wrap and compact DNA into chromatin, limiting DNA accessibility to the cellular machineries which require DNA as a template. Histones thereby play a central role in transcription regulation, DNA repair, DNA replication and chromosomal stability. DNA accessibility is regulated via a complex set of post-translational modifications of histones, also called histone code, and nucleosome remodeling. This Cairina moschata (Muscovy duck) protein is Histone H3.3C.